A 292-amino-acid polypeptide reads, in one-letter code: 4'-phosphopantetheinyl transferase 1 (292 aa).

The protein belongs to the P-Pant transferase superfamily.

The enzyme catalyses apo-[ACP] + CoA = holo-[ACP] + adenosine 3',5'-bisphosphate + H(+). Its function is as follows. Transfers the 4'-phosphopantetheine moiety from coenzyme A to a Ser of an acyl-carrier-protein. The enzyme is able to transfer the cofactor to a broad range of enzymes with acyl- or peptidyl-carrier protein domains. Required for primary biological processes such as growth and asexual/sexual development, and activates target enzymes involved in the synthesis of metabolites such as fatty acids, nonribosomal peptides and polyketides such as the gamma-pyrones fusapyrone (FPY) and deoxyfusapyrone (dFPY). This Fusarium mangiferae (Mango malformation disease fungus) protein is 4'-phosphopantetheinyl transferase 1.